Here is a 279-residue protein sequence, read N- to C-terminus: Diaminopimelate epimerase (279 aa).

Residues Asn-11 and Asn-64 each coordinate substrate. The active-site Proton donor is the Cys-73. Residues 74–75 (GN), Asn-170, and 187–188 (ER) contribute to the substrate site. Cys-196 acts as the Proton acceptor in catalysis. 197–198 (GS) contributes to the substrate binding site. The interval 255-279 (NTDHQRRRHSLSRSPSGRPRLQECR) is disordered.

This sequence belongs to the diaminopimelate epimerase family. Homodimer.

It is found in the cytoplasm. It carries out the reaction (2S,6S)-2,6-diaminopimelate = meso-2,6-diaminopimelate. Its pathway is amino-acid biosynthesis; L-lysine biosynthesis via DAP pathway; DL-2,6-diaminopimelate from LL-2,6-diaminopimelate: step 1/1. Its function is as follows. Catalyzes the stereoinversion of LL-2,6-diaminopimelate (L,L-DAP) to meso-diaminopimelate (meso-DAP), a precursor of L-lysine. In Methanopyrus kandleri (strain AV19 / DSM 6324 / JCM 9639 / NBRC 100938), this protein is Diaminopimelate epimerase.